The chain runs to 451 residues: Uronate isomerase (451 aa).

It belongs to the metallo-dependent hydrolases superfamily. Uronate isomerase family.

The catalysed reaction is D-glucuronate = D-fructuronate. It catalyses the reaction aldehydo-D-galacturonate = keto-D-tagaturonate. Its pathway is carbohydrate metabolism; pentose and glucuronate interconversion. The protein is Uronate isomerase of Thermotoga neapolitana (strain ATCC 49049 / DSM 4359 / NBRC 107923 / NS-E).